Consider the following 296-residue polypeptide: tRNA dimethylallyltransferase (296 aa).

2 to 9 (GPTASGKT) contributes to the ATP binding site. 4–9 (TASGKT) provides a ligand contact to substrate. 3 interaction with substrate tRNA regions span residues 27–30 (DSAL), 151–155 (QRLAR), and 232–237 (RCVGYR).

Belongs to the IPP transferase family. In terms of assembly, monomer. Mg(2+) serves as cofactor.

It catalyses the reaction adenosine(37) in tRNA + dimethylallyl diphosphate = N(6)-dimethylallyladenosine(37) in tRNA + diphosphate. Its function is as follows. Catalyzes the transfer of a dimethylallyl group onto the adenine at position 37 in tRNAs that read codons beginning with uridine, leading to the formation of N6-(dimethylallyl)adenosine (i(6)A). This is tRNA dimethylallyltransferase from Shewanella pealeana (strain ATCC 700345 / ANG-SQ1).